Consider the following 222-residue polypeptide: Protein GrpE (222 aa).

Residues Met-1–Gly-82 are disordered. Residues Ser-20–Asp-71 are compositionally biased toward low complexity.

This sequence belongs to the GrpE family. As to quaternary structure, homodimer.

The protein localises to the cytoplasm. Participates actively in the response to hyperosmotic and heat shock by preventing the aggregation of stress-denatured proteins, in association with DnaK and GrpE. It is the nucleotide exchange factor for DnaK and may function as a thermosensor. Unfolded proteins bind initially to DnaJ; upon interaction with the DnaJ-bound protein, DnaK hydrolyzes its bound ATP, resulting in the formation of a stable complex. GrpE releases ADP from DnaK; ATP binding to DnaK triggers the release of the substrate protein, thus completing the reaction cycle. Several rounds of ATP-dependent interactions between DnaJ, DnaK and GrpE are required for fully efficient folding. The polypeptide is Protein GrpE (Bifidobacterium adolescentis (strain ATCC 15703 / DSM 20083 / NCTC 11814 / E194a)).